The chain runs to 211 residues: RING finger protein 222 (211 aa).

The RING-type zinc finger occupies 14-65 (CPVCYEKFRDLDGASRTLSCGHVFCHDCLVKYLLSTRVDGQVQRTIVCPICR). The helical transmembrane segment at 187 to 207 (LITLIAVVAVVAAILPWVLLV) threads the bilayer.

It localises to the membrane. The polypeptide is RING finger protein 222 (Rnf222) (Mus musculus (Mouse)).